The primary structure comprises 109 residues: Flagellar hook-basal body complex protein FliE (109 aa).

Belongs to the FliE family.

The protein resides in the bacterial flagellum basal body. This is Flagellar hook-basal body complex protein FliE from Pseudomonas fluorescens (strain Pf0-1).